The following is a 140-amino-acid chain: ATP synthase epsilon chain (140 aa).

It belongs to the ATPase epsilon chain family. As to quaternary structure, F-type ATPases have 2 components, CF(1) - the catalytic core - and CF(0) - the membrane proton channel. CF(1) has five subunits: alpha(3), beta(3), gamma(1), delta(1), epsilon(1). CF(0) has three main subunits: a, b and c.

The protein localises to the cell inner membrane. Produces ATP from ADP in the presence of a proton gradient across the membrane. The polypeptide is ATP synthase epsilon chain (Xanthomonas oryzae pv. oryzae (strain PXO99A)).